The primary structure comprises 485 residues: Cobyric acid synthase (485 aa).

In terms of domain architecture, GATase cobBQ-type spans 248 to 435; that stretch reads VLKVVVPVLP…LHGLFESPDA (188 aa). The Nucleophile role is filled by Cys329. His427 is an active-site residue.

This sequence belongs to the CobB/CobQ family. CobQ subfamily.

It participates in cofactor biosynthesis; adenosylcobalamin biosynthesis. Catalyzes amidations at positions B, D, E, and G on adenosylcobyrinic A,C-diamide. NH(2) groups are provided by glutamine, and one molecule of ATP is hydrogenolyzed for each amidation. The protein is Cobyric acid synthase of Stutzerimonas stutzeri (strain A1501) (Pseudomonas stutzeri).